The primary structure comprises 1501 residues: MGGLAWGPSRAAGSSWVNASGTWEQPLRGFSGLQGGRRRGRGEKGIPEEPLCQLTPQLGLSLRVPFGLGDYGLDMPGPQPSAASQTTGAVACLAEVLLWVGGSVVVSPRWQLSLVVERCMSAMQEGTQMVKLRGSSKGLVRFYYLDEHRSCLRWRPSRKNEKAKISIDSIQEVSEGRQSEIFQRYPDSSFDPNCCFSIYHGSHRESLDLVSPSSEEARTWVTGLRYLMAGISDEDSLARRQRTRDQWLKQTFDEADKNGDGSLSISEVLQLLHKLNVNLPRQRVKQMFREADTDDHQGTLGFEEFCAFYKMMSTRRDLYLLMLTYSNHKDHLDASDLQRFLEVEQKMNGVTLESCQNIIEQFEPCLENKSKGMLGIDGFTNYTRSPAGDIFNPEHNRVHQDMTQPLSHYFITSSHNTYLVGDQLMSQSRVDMYAWVLQAGCRCVEVDCWDGPDGEPIVHHGYTLTSKILFKDVIETINKYAFIKNEYPVILSIENHCSVVQQKKMAQYLTDILGDKLDLSSVSSEDATMLPSPQMLKGKILVKGKKLPANISEDAEEGEVSDEDSADEMEDDCKLLNGDASTNRKRVENIAKKKLDSLIKESKIRDCEDPNDFSVSTLSPSGKLGRKAEAKKGQSKVEEDVEAGEDSGVSRQNSRLFMSSFSKRKKKGSKIKKVASVEEGDETLDSPGSQSRGTARQKKTMKLSRALSDLVKYTKSVGTHDVEIEVVSSWQVSSFSETKAHQILQQKPTQYLRFNQHQLSRIYPSSYRVDSSNYNPQPFWNAGCQMVALNYQSEGRMLQLNRAKFSANGDCGYVLKPQCMCQGVFNPNSEDPLPGQLKKQLALRIISGQQLPKPRDSVLGDRGEIIDPFVEVEVIGLPVDCSKEQTRVVDDNGFNPMWEETLVFTVHMPEIALVRFLVWDHDPIGRDFIGQRTLAFSSIMPGYRHVYLEGMEEASIFVHVAVSDISGKVKQTLGLKGLFLRGTKPGSLDSHAAGQPLPRPSVSQRLLRRTASAPTKSQKPSRKGFPELALGTQDAGSEGAADDVAPSSPNPALEAPTQERSGSSSPRDTRLFPLQRPISPLCSLEPIAEEPALGPGLPLQAAAPTGPSQEGSQCPVGLGAKVTSSQQTSLGAFGTLQLRIGGGRENEEPPLRPHNGGISSGPREGTSGRQTDSKSRSRVPGHLPVVRRAKSEGQVLSELSPTPAVYSDATGTDRLWQRLEPGSHRDSVSSSSSMSSNDTVIDLSLPSLGLCRSRESIPGVSLGRLTSRPCLASAARPDLPPVTKSKSNPNLRVAGGLPTAPDELQPRPLAPRLTGHHPRPPWHHLTLVGLRDCPVSAKSKSLGDLTADDFAPSFQGSTSSLSCGLGSLGVAHQVLEPGIRRDALTEQLRWLTGFQQAGDITSPTSLGPAGDGSVGGPSFLRRSSSRSQSRVRAIASRARQAQERQQRLRGQDSRGPPEEERGTPEGACSVGHEGCVDVPMPAKGAPEQVCGAADGQLLLRL.

Positions 28–47 (RGFSGLQGGRRRGRGEKGIP) are disordered. Positions 75-229 (MPGPQPSAAS…WVTGLRYLMA (155 aa)) are necessary for plasma membrane localization. Residues 121 to 229 (SAMQEGTQMV…WVTGLRYLMA (109 aa)) enclose the PH domain. EF-hand domains lie at 243 to 278 (TRDQ…LNVN) and 279 to 315 (LPRQ…MSTR). Ca(2+) contacts are provided by Asp256, Asn258, Asp260, Ser262, and Glu267. The PI-PLC X-box domain maps to 400–545 (QDMTQPLSHY…LKGKILVKGK (146 aa)). His415 is an active-site residue. Ca(2+)-binding residues include Asn416, Glu445, and Asp447. The active site involves His459. Residue Glu494 coordinates Ca(2+). Lys543 and Lys545 together coordinate substrate. Disordered regions lie at residues 551-570 (ISED…DEME) and 609-700 (DPND…QKKT). Positions 553-570 (EDAEEGEVSDEDSADEME) are enriched in acidic residues. Phosphoserine occurs at positions 561 and 565. The span at 626–638 (RKAEAKKGQSKVE) shows a compositional bias: basic and acidic residues. The segment covering 662 to 673 (SKRKKKGSKIKK) has biased composition (basic residues). Phosphoserine is present on residues Ser676 and Ser686. In terms of domain architecture, PI-PLC Y-box spans 707–821 (LSDLVKYTKS…GYVLKPQCMC (115 aa)). Substrate-binding residues include Ser734 and Arg761. In terms of domain architecture, C2 spans 821–950 (CQGVFNPNSE…PGYRHVYLEG (130 aa)). Residues Ile865, Asp867, Asp891, Asp920, His921, and Asp922 each coordinate Ca(2+). Disordered regions lie at residues 986–1073 (GSLD…RLFP), 1089–1238 (EEPA…SSND), 1273–1305 (SAAR…DELQ), and 1398–1469 (GDIT…GACS). Over residues 1089 to 1107 (EEPALGPGLPLQAAAPTGP) the composition is skewed to low complexity. Basic and acidic residues-rich tracts occupy residues 1142–1151 (GGRENEEPPL) and 1215–1227 (LWQR…HRDS). The span at 1421 to 1439 (RRSSSRSQSRVRAIASRAR) shows a compositional bias: low complexity. The segment covering 1440-1463 (QAQERQQRLRGQDSRGPPEEERGT) has biased composition (basic and acidic residues).

The cofactor is Ca(2+). Specifically detected in the brain, with higher level in cerebral cortex, olfactory bulb and hippocampus (at protein level). Expressed in the pyramidal cells of the hippocampus, but also in eye and lung.

It localises to the cytoplasm. Its subcellular location is the cell membrane. It catalyses the reaction a 1,2-diacyl-sn-glycero-3-phospho-(1D-myo-inositol-4,5-bisphosphate) + H2O = 1D-myo-inositol 1,4,5-trisphosphate + a 1,2-diacyl-sn-glycerol + H(+). With respect to regulation, activity is stimulated by GNB1:GNG2. The production of the second messenger molecules diacylglycerol (DAG) and inositol 1,4,5-trisphosphate (IP3) is mediated by activated phosphatidylinositol-specific phospholipase C enzymes. This phospholipase activity is very sensitive to calcium. May be important for formation and maintenance of the neuronal network in the postnatal brain. The protein is 1-phosphatidylinositol 4,5-bisphosphate phosphodiesterase eta-2 of Mus musculus (Mouse).